A 232-amino-acid chain; its full sequence is Large ribosomal subunit protein uL1 (232 aa).

This sequence belongs to the universal ribosomal protein uL1 family. In terms of assembly, part of the 50S ribosomal subunit.

Its function is as follows. Binds directly to 23S rRNA. The L1 stalk is quite mobile in the ribosome, and is involved in E site tRNA release. Functionally, protein L1 is also a translational repressor protein, it controls the translation of the L11 operon by binding to its mRNA. The protein is Large ribosomal subunit protein uL1 of Xanthomonas axonopodis pv. citri (strain 306).